Here is a 530-residue protein sequence, read N- to C-terminus: Ubiquitin carboxyl-terminal hydrolase 17-like protein 5 (530 aa).

In terms of domain architecture, USP spans 80-375 (AGLQNMGNTC…QAYVLFYIQK (296 aa)). Cys89 serves as the catalytic Nucleophile. The active-site Proton acceptor is His334. Composition is skewed to basic and acidic residues over residues 382-392 (SESVSRGREPR) and 398-412 (DTDRRATQGELKRDH). 2 disordered regions span residues 382-412 (SESVSRGREPRALGAEDTDRRATQGELKRDH) and 477-530 (NHHP…LVCQ). Positions 493–505 (TPTHQESMNTGTL) are enriched in polar residues. A compositionally biased stretch (basic residues) spans 510–524 (GRARRSKGKNKHSKR).

Belongs to the peptidase C19 family. USP17 subfamily.

It is found in the nucleus. The protein resides in the endoplasmic reticulum. It carries out the reaction Thiol-dependent hydrolysis of ester, thioester, amide, peptide and isopeptide bonds formed by the C-terminal Gly of ubiquitin (a 76-residue protein attached to proteins as an intracellular targeting signal).. Its function is as follows. Deubiquitinating enzyme that removes conjugated ubiquitin from specific proteins to regulate different cellular processes that may include cell proliferation, progression through the cell cycle, apoptosis, cell migration, and the cellular response to viral infection. The polypeptide is Ubiquitin carboxyl-terminal hydrolase 17-like protein 5 (USP17L5) (Homo sapiens (Human)).